Consider the following 117-residue polypeptide: Large ribosomal subunit protein uL22 (117 aa).

It belongs to the universal ribosomal protein uL22 family. In terms of assembly, part of the 50S ribosomal subunit.

In terms of biological role, this protein binds specifically to 23S rRNA; its binding is stimulated by other ribosomal proteins, e.g. L4, L17, and L20. It is important during the early stages of 50S assembly. It makes multiple contacts with different domains of the 23S rRNA in the assembled 50S subunit and ribosome. The globular domain of the protein is located near the polypeptide exit tunnel on the outside of the subunit, while an extended beta-hairpin is found that lines the wall of the exit tunnel in the center of the 70S ribosome. The polypeptide is Large ribosomal subunit protein uL22 (Lacticaseibacillus casei (strain BL23) (Lactobacillus casei)).